Consider the following 851-residue polypeptide: B-box type zinc finger protein ncl-1 (851 aa).

Residues 71 to 91 (GFGFGSPSSTTSSSPPLSNSP) form a disordered region. Positions 76 to 91 (SPSSTTSSSPPLSNSP) are enriched in low complexity. A B box-type 1; atypical zinc finger spans residues 127 to 174 (VPAVHCSGCKSNETATSFCQDCNANLCDNCTMAHKFMHCFADHRVVSL). 4 residues coordinate Zn(2+): C132, C135, C156, and H160. The span at 176–197 (TPGTGSSSSSTSSSSSASSTSS) shows a compositional bias: low complexity. The disordered stretch occupies residues 176-211 (TPGTGSSSSSTSSSSSASSTSSHQVPSLGGKQSPDS). Residues 218-261 (KRSVLCLQHRASELVFFCVSCNLAICRDCTVSDHPSGTHQYELI) form a B box-type 2 zinc finger. 4 residues coordinate Zn(2+): C223, H226, C246, and H251. Residues 303 to 331 (SLHNAHAQLEETVSNLINVIQDQKKTLAK) adopt a coiled-coil conformation. 5 NHL repeats span residues 573–616 (HCKF…FDKE), 620–665 (KFQF…YNQY), 666–707 (GQFL…FDMF), 708–750 (GNIL…FSYE), and 751–794 (GQYL…FSQD).

Present in cells in which nucleoli are absent, and absent from large cells in which nucleoli are prominent. Highly expressed in the gonads.

It is found in the cytoplasm. In terms of biological role, translational repressor that inhibits protein synthesis. Represses the translation of mRNAs such as fib-1, probably by being recruited by RNA-binding protein nos-2 and the Pumilio proteins puf-5, puf-8 and puf-9 to the consensus core PUF binding motif in the 3'-UTR of fib-1 mRNA. Negatively regulates ribosomal RNA (rRNA) synthesis, ribosomal protein synthesis and nucleolus size. Its role in the negative regulation of nucleolus size is most likely through its negative regulation of the translation of proteins such as the rRNA 2'-O-methyltransferase fib-1, and dao-5. Might act directly as a transcription factor to inhibit RNA polymerase I (rRNA) and III (5S RNA) transcription. Plays a role in embryonic development, and in particular, is involved in regulating the localization of proteins, such as par-2, that are required for embryonic cell polarity. Plays a role in the regulation of lifespan, and the response to nutrient availability. This chain is B-box type zinc finger protein ncl-1, found in Caenorhabditis elegans.